The sequence spans 304 residues: uncharacterized protein (304 aa).

This is an uncharacterized protein from Ureaplasma parvum serovar 3 (strain ATCC 700970).